A 51-amino-acid chain; its full sequence is uncharacterized protein (51 aa).

Positions methionine 1–threonine 51 are disordered. Positions asparagine 19–leucine 36 are enriched in low complexity.

This is an uncharacterized protein from Bdellovibrio bacteriovorus (Bacteriophage phiMH2K).